The primary structure comprises 320 residues: Replication factor C small subunit 2 (320 aa).

44–51 is an ATP binding site; the sequence is GPPGTGKT.

It belongs to the activator 1 small subunits family. RfcS subfamily. In terms of assembly, heteromultimer composed of small subunits (RfcS) and large subunits (RfcL).

In terms of biological role, part of the RFC clamp loader complex which loads the PCNA sliding clamp onto DNA. The sequence is that of Replication factor C small subunit 2 from Pyrobaculum islandicum (strain DSM 4184 / JCM 9189 / GEO3).